A 119-amino-acid chain; its full sequence is Small ribosomal subunit protein uS13 (119 aa).

A disordered region spans residues 92 to 119 (RRGLPVRGQRTKTNARTRKGPRKAIRAR).

This sequence belongs to the universal ribosomal protein uS13 family. In terms of assembly, part of the 30S ribosomal subunit. Forms a loose heterodimer with protein S19. Forms two bridges to the 50S subunit in the 70S ribosome.

In terms of biological role, located at the top of the head of the 30S subunit, it contacts several helices of the 16S rRNA. In the 70S ribosome it contacts the 23S rRNA (bridge B1a) and protein L5 of the 50S subunit (bridge B1b), connecting the 2 subunits; these bridges are implicated in subunit movement. Contacts the tRNAs in the A and P-sites. The sequence is that of Small ribosomal subunit protein uS13 from Nitrosomonas eutropha (strain DSM 101675 / C91 / Nm57).